Reading from the N-terminus, the 205-residue chain is Rho-related GTP-binding protein RhoQ (205 aa).

Residue 16-23 (GDGAVGKT) participates in GTP binding. Positions 38-46 (YVPTVFDHY) match the Effector region motif. GTP contacts are provided by residues 63–67 (DTAGQ) and 121–124 (TQID). Cys202 carries the cysteine methyl ester modification. Cys202 carries S-farnesyl cysteine lipidation. The propeptide at 203-205 (LIT) is removed in mature form.

The protein belongs to the small GTPase superfamily. Rho family. As to quaternary structure, interacts with EXO70, CDC42EP1, CDC42EP2 and CDC42EP3 in a GTP-dependent manner. Interacts with CDC42EP4, PARD6A, PARD6G (and probably PARD6B) in a GTP-dependent manner. Part of a quaternary complex containing PARD3, some PARD6 protein (PARD6A, PARD6B or PARD6G) and some atypical PKC protein (PRKCI or PRKCZ). Interacts with GOPC. Interacts with ARHGAP33/TCGAP. In terms of processing, may be post-translationally modified by both palmitoylation and polyisoprenylation.

It is found in the cytoplasm. The protein resides in the cell membrane. Its activity is regulated as follows. Regulated by guanine nucleotide exchange factors (GEFs) which promote the exchange of bound GDP for free GTP, GTPase activating proteins (GAPs) which increase the GTP hydrolysis activity, and GDP dissociation inhibitors which inhibit the dissociation of the nucleotide from the GTPase. Functionally, plasma membrane-associated small GTPase which cycles between an active GTP-bound and an inactive GDP-bound state. In active state binds to a variety of effector proteins to regulate cellular responses. Involved in epithelial cell polarization processes. May play a role in CFTR trafficking to the plasma membrane. Causes the formation of thin, actin-rich surface projections called filopodia. This is Rho-related GTP-binding protein RhoQ (Rhoq) from Mus musculus (Mouse).